A 336-amino-acid polypeptide reads, in one-letter code: Atypical chemokine receptor 1 (336 aa).

Residues 1-63 (MGNCLHQAEL…CNLLDDSSLP (63 aa)) lie on the Extracellular side of the membrane. Asn-16 and Asn-33 each carry an N-linked (GlcNAc...) asparagine glycan. 2 cysteine pairs are disulfide-bonded: Cys-51–Cys-276 and Cys-129–Cys-195. Residues 64 to 84 (FFILASVLGILASSTVLFMLF) traverse the membrane as a helical segment. Topologically, residues 85 to 95 (RPLFRWQLCPG) are cytoplasmic. The helical transmembrane segment at 96–116 (WPVLAQLAVGSALFSIVVPIL) threads the bilayer. Residues 117-129 (APGLGNTRSSALC) are Extracellular-facing. A helical membrane pass occupies residues 130–153 (SLGYCVWYGSAFAQALLLGCHASL). The Cytoplasmic portion of the chain corresponds to 154–166 (GPKLGAGQVPGLT). Residues 167–187 (LGLTVGLWGAAALLTVPITLA) traverse the membrane as a helical segment. Over 188-207 (SGASDGLCTPIYSTELKALQ) the chain is Extracellular. Residues 208–228 (ATHTVACFAIFVLLPLGLFGA) traverse the membrane as a helical segment. The Cytoplasmic portion of the chain corresponds to 229-244 (KGVKKALGMGPGPWMT). Residues 245-265 (ILWIWFIFWWPHGVVLGLDFL) traverse the membrane as a helical segment. Over 266-287 (VRSKLLLLPTCLAQQVLDLLLN) the chain is Extracellular. A helical membrane pass occupies residues 288–308 (LAEALTIVHCVATPLLLALFC). Residues 309 to 336 (HQATRTLLPSLPLPERWSSPVDTLGSKS) are Cytoplasmic-facing.

It belongs to the G-protein coupled receptor 1 family. Atypical chemokine receptor subfamily.

The protein resides in the early endosome. It localises to the recycling endosome. Its subcellular location is the membrane. Functionally, atypical chemokine receptor that controls chemokine levels and localization via high-affinity chemokine binding that is uncoupled from classic ligand-driven signal transduction cascades, resulting instead in chemokine sequestration, degradation, or transcytosis. Also known as interceptor (internalizing receptor) or chemokine-scavenging receptor or chemokine decoy receptor. Has a promiscuous chemokine-binding profile, interacting with inflammatory chemokines of both the CXC and the CC subfamilies but not with homeostatic chemokines. Acts as a receptor for chemokines including CCL2, CCL5, CCL7, CCL11, CCL13, CCL14, CCL17, CXCL5, CXCL6, IL8/CXCL8, CXCL11, GRO, RANTES, MCP-1 and TARC. May regulate chemokine bioavailability and, consequently, leukocyte recruitment through two distinct mechanisms: when expressed in endothelial cells, it sustains the abluminal to luminal transcytosis of tissue-derived chemokines and their subsequent presentation to circulating leukocytes; when expressed in erythrocytes, serves as blood reservoir of cognate chemokines but also as a chemokine sink, buffering potential surges in plasma chemokine levels. The chain is Atypical chemokine receptor 1 (ACKR1) from Sapajus apella (Brown-capped capuchin).